The following is a 238-amino-acid chain: Octanoyltransferase (238 aa).

The region spanning 44–224 is the BPL/LPL catalytic domain; that stretch reads AGGPDSLLLL…AVLDALDGRI (181 aa). Residues 82–89, 154–156, and 167–169 each bind substrate; these read RGGKITWH, AIG, and GFA. Catalysis depends on Cys-185, which acts as the Acyl-thioester intermediate.

This sequence belongs to the LipB family.

Its subcellular location is the cytoplasm. The catalysed reaction is octanoyl-[ACP] + L-lysyl-[protein] = N(6)-octanoyl-L-lysyl-[protein] + holo-[ACP] + H(+). Its pathway is protein modification; protein lipoylation via endogenous pathway; protein N(6)-(lipoyl)lysine from octanoyl-[acyl-carrier-protein]: step 1/2. In terms of biological role, catalyzes the transfer of endogenously produced octanoic acid from octanoyl-acyl-carrier-protein onto the lipoyl domains of lipoate-dependent enzymes. Lipoyl-ACP can also act as a substrate although octanoyl-ACP is likely to be the physiological substrate. This Mycolicibacterium gilvum (strain PYR-GCK) (Mycobacterium gilvum (strain PYR-GCK)) protein is Octanoyltransferase.